Reading from the N-terminus, the 420-residue chain is Torsin-4A-A (420 aa).

The chain crosses the membrane as a helical span at residues 130–150 (CLLLFIGIVCFQILNAIENLD). Residue 202 to 209 (GPSGVGKS) coordinates ATP.

This sequence belongs to the ClpA/ClpB family. Torsin subfamily.

Its subcellular location is the membrane. This Xenopus laevis (African clawed frog) protein is Torsin-4A-A (tor4a-a).